The chain runs to 158 residues: Transcription elongation factor GreA (158 aa).

Residues 1–26 are a coiled coil; that stretch reads MNKVPLTEKGAQQLREELQELKTVVR.

Belongs to the GreA/GreB family.

In terms of biological role, necessary for efficient RNA polymerase transcription elongation past template-encoded arresting sites. The arresting sites in DNA have the property of trapping a certain fraction of elongating RNA polymerases that pass through, resulting in locked ternary complexes. Cleavage of the nascent transcript by cleavage factors such as GreA or GreB allows the resumption of elongation from the new 3'terminus. GreA releases sequences of 2 to 3 nucleotides. The sequence is that of Transcription elongation factor GreA from Nitrosococcus oceani (strain ATCC 19707 / BCRC 17464 / JCM 30415 / NCIMB 11848 / C-107).